The following is a 243-amino-acid chain: Triosephosphate isomerase (243 aa).

A substrate-binding site is contributed by 9–11; that stretch reads NWK. Residue His96 is the Electrophile of the active site. The Proton acceptor role is filled by Glu165. Residues Gly171, Ser204, and 225–226 each bind substrate; that span reads GG.

This sequence belongs to the triosephosphate isomerase family. Homodimer.

Its subcellular location is the cytoplasm. The catalysed reaction is D-glyceraldehyde 3-phosphate = dihydroxyacetone phosphate. Its pathway is carbohydrate biosynthesis; gluconeogenesis. It functions in the pathway carbohydrate degradation; glycolysis; D-glyceraldehyde 3-phosphate from glycerone phosphate: step 1/1. In terms of biological role, involved in the gluconeogenesis. Catalyzes stereospecifically the conversion of dihydroxyacetone phosphate (DHAP) to D-glyceraldehyde-3-phosphate (G3P). In Prochlorococcus marinus (strain SARG / CCMP1375 / SS120), this protein is Triosephosphate isomerase.